Reading from the N-terminus, the 494-residue chain is uncharacterized protein (494 aa).

VOC domains lie at 18-174 (FIDC…FINR) and 229-408 (SLDH…FGIL). Residues His-232, His-349, and Glu-460 each contribute to the Fe cation site.

The protein belongs to the 4HPPD family. Requires Fe cation as cofactor.

In terms of biological role, may have dioxygenase activity. This is an uncharacterized protein from Dictyostelium discoideum (Social amoeba).